A 127-amino-acid chain; its full sequence is Basic leucine zipper transcriptional factor ATF-like 3 (127 aa).

The interval 1-72 (MSQGLPAAGS…LHEEYESLEQ (72 aa)) is disordered. 2 positions are modified to phosphoserine: Ser2 and Ser31. Positions 35–98 (DDRKVRRREK…KHLTEALKEH (64 aa)) constitute a bZIP domain. The tract at residues 37–62 (RKVRRREKNRVAAQRSRKKQTQKADK) is basic motif. The span at 58-67 (QKADKLHEEY) shows a compositional bias: basic and acidic residues. The segment at 63–91 (LHEEYESLEQENTMLRREIGKLTEELKHL) is leucine-zipper.

It belongs to the bZIP family. As to quaternary structure, heterodimer; heterodimerizes with JUN family proteins. Interacts with JUN.

It localises to the nucleus. Its function is as follows. AP-1 family transcription factor that controls the differentiation of CD8(+) thymic conventional dendritic cells in the immune system. Required for development of CD8-alpha(+) classical dendritic cells (cDCs) and related CD103(+) dendritic cells that cross-present antigens to CD8 T-cells and produce interleukin-12 (IL12) in response to pathogens. Acts via the formation of a heterodimer with JUN family proteins that recognizes and binds DNA sequence 5'-TGA[CG]TCA-3' and regulates expression of target genes. In Homo sapiens (Human), this protein is Basic leucine zipper transcriptional factor ATF-like 3 (BATF3).